We begin with the raw amino-acid sequence, 536 residues long: T-complex protein 1 subunit delta (536 aa).

Residues 1-21 are disordered; sequence MAAVAAPMASKPRGSKAESFV.

Belongs to the TCP-1 chaperonin family. In terms of assembly, heterooligomeric complex of about 850 to 900 kDa that forms two stacked rings, 12 to 16 nm in diameter.

It is found in the cytoplasm. In terms of biological role, molecular chaperone; assists the folding of proteins upon ATP hydrolysis. Known to play a role, in vitro, in the folding of actin and tubulin. The polypeptide is T-complex protein 1 subunit delta (Arabidopsis thaliana (Mouse-ear cress)).